A 476-amino-acid polypeptide reads, in one-letter code: Beta-xylosidase (476 aa).

E188 functions as the Proton donor in the catalytic mechanism. E292 acts as the Nucleophile in catalysis. N468 is a glycosylation site (N-linked (GlcNAc...) asparagine).

Belongs to the glycosyl hydrolase 5 (cellulase A) family.

The protein localises to the secreted. The catalysed reaction is Hydrolysis of (1-&gt;4)-beta-D-xylans, to remove successive D-xylose residues from the non-reducing termini.. Catalyzes the hydrolysis of xylo-oligomers to xylose units and plays an important role in xylan degradation. Can also perform the transglycosylation of xylose and alcohol. Has no endoglucanase activity. The sequence is that of Beta-xylosidase from Phanerodontia chrysosporium (White-rot fungus).